Reading from the N-terminus, the 104-residue chain is Large ribosomal subunit protein bL21 (104 aa).

The protein belongs to the bacterial ribosomal protein bL21 family. As to quaternary structure, part of the 50S ribosomal subunit. Contacts protein L20.

In terms of biological role, this protein binds to 23S rRNA in the presence of protein L20. The sequence is that of Large ribosomal subunit protein bL21 from Thermotoga petrophila (strain ATCC BAA-488 / DSM 13995 / JCM 10881 / RKU-1).